The sequence spans 212 residues: MTDITTPFPATPHKLGLYPVVDSVEWIARLLDAGVTTLQLRIKDLPDEQVEDDIAAAIALGKRYDARLFINDYWQLAIKHGAYGVHLGQEDLDTTDLAAIHRAGLRLGVSTHDDSELARAIAVKPSYIALGHIFPTQTKDMPSAPQGLVELKRHIAGLSDYPTVAIGGISIDRVAAVLDCGVGSVAVVSAITQAPDWRAATAQLLQLIEGKE.

4-amino-2-methyl-5-(diphosphooxymethyl)pyrimidine contacts are provided by residues 39–43 (QLRIK) and Asn-71. Mg(2+) is bound by residues Asp-72 and Asp-91. Ser-110 lines the 4-amino-2-methyl-5-(diphosphooxymethyl)pyrimidine pocket. Position 136 to 138 (136 to 138 (TQT)) interacts with 2-[(2R,5Z)-2-carboxy-4-methylthiazol-5(2H)-ylidene]ethyl phosphate. Lys-139 serves as a coordination point for 4-amino-2-methyl-5-(diphosphooxymethyl)pyrimidine. 2-[(2R,5Z)-2-carboxy-4-methylthiazol-5(2H)-ylidene]ethyl phosphate is bound by residues Gly-168 and 188–189 (VS).

Belongs to the thiamine-phosphate synthase family. Mg(2+) is required as a cofactor.

The catalysed reaction is 2-[(2R,5Z)-2-carboxy-4-methylthiazol-5(2H)-ylidene]ethyl phosphate + 4-amino-2-methyl-5-(diphosphooxymethyl)pyrimidine + 2 H(+) = thiamine phosphate + CO2 + diphosphate. It carries out the reaction 2-(2-carboxy-4-methylthiazol-5-yl)ethyl phosphate + 4-amino-2-methyl-5-(diphosphooxymethyl)pyrimidine + 2 H(+) = thiamine phosphate + CO2 + diphosphate. It catalyses the reaction 4-methyl-5-(2-phosphooxyethyl)-thiazole + 4-amino-2-methyl-5-(diphosphooxymethyl)pyrimidine + H(+) = thiamine phosphate + diphosphate. Its pathway is cofactor biosynthesis; thiamine diphosphate biosynthesis; thiamine phosphate from 4-amino-2-methyl-5-diphosphomethylpyrimidine and 4-methyl-5-(2-phosphoethyl)-thiazole: step 1/1. Condenses 4-methyl-5-(beta-hydroxyethyl)thiazole monophosphate (THZ-P) and 2-methyl-4-amino-5-hydroxymethyl pyrimidine pyrophosphate (HMP-PP) to form thiamine monophosphate (TMP). In Serratia proteamaculans (strain 568), this protein is Thiamine-phosphate synthase.